Consider the following 127-residue polypeptide: Large ribosomal subunit protein eL24 (127 aa).

Positions 93–127 (KRAQKPEVKQAAAEQAKREIKEKKKAAAKKAAPKK) are disordered. Residues 115–127 (KKKAAAKKAAPKK) are compositionally biased toward basic residues.

This sequence belongs to the eukaryotic ribosomal protein eL24 family.

The chain is Large ribosomal subunit protein eL24 (rpl24) from Dictyostelium discoideum (Social amoeba).